The sequence spans 242 residues: Ubiquitin-conjugating enzyme E2 6 (242 aa).

Topologically, residues 1 to 217 (MASRQAYKRL…QPAGNGTTSN (217 aa)) are cytoplasmic. A UBC core domain is found at 5–163 (QAYKRLSKEY…FPELAEQNRR (159 aa)). Cys87 serves as the catalytic Glycyl thioester intermediate. The chain crosses the membrane as a helical span at residues 218-240 (SIGRSLLFVLFSLAALLVAVCYT).

It belongs to the ubiquitin-conjugating enzyme family.

It localises to the endoplasmic reticulum membrane. It catalyses the reaction S-ubiquitinyl-[E1 ubiquitin-activating enzyme]-L-cysteine + [E2 ubiquitin-conjugating enzyme]-L-cysteine = [E1 ubiquitin-activating enzyme]-L-cysteine + S-ubiquitinyl-[E2 ubiquitin-conjugating enzyme]-L-cysteine.. It functions in the pathway protein modification; protein ubiquitination. In terms of biological role, catalyzes the covalent attachment of ubiquitin to other proteins. Functions in degradation of misfolded or regulated proteins localized in the endoplasmic reticulum (ER) lumen or membrane via the ubiquitin-proteasome system. Cognate E2 conjugating enzyme for the DOA10 ubiquitin ligase complex, which is part of the ERAD-C pathway responsible for the rapid degradation of membrane proteins with misfolded cytoplasmic domains. This chain is Ubiquitin-conjugating enzyme E2 6 (UBC6), found in Eremothecium gossypii (strain ATCC 10895 / CBS 109.51 / FGSC 9923 / NRRL Y-1056) (Yeast).